We begin with the raw amino-acid sequence, 478 residues long: Ankyrin repeat and BTB/POZ domain-containing protein 1 (478 aa).

2 ANK repeats span residues 1–31 (MDTS…EVNV) and 35–64 (WDST…RCEA). 2 BTB domains span residues 115-182 (SDVV…DIGV) and 272-346 (PDIC…ELPP). Positions 451 to 477 (VQTYSAIEEAQQRLRALEDLLVSIGLD) form a coiled coil.

It localises to the cytoplasm. In terms of biological role, may act as a mediator of the PTEN growth-suppressive signaling pathway. May play a role in developmental processes. The chain is Ankyrin repeat and BTB/POZ domain-containing protein 1 from Mus musculus (Mouse).